We begin with the raw amino-acid sequence, 259 residues long: 3-methyl-2-oxobutanoate hydroxymethyltransferase (259 aa).

Aspartate 44 and aspartate 83 together coordinate Mg(2+). 3-methyl-2-oxobutanoate-binding positions include 44-45, aspartate 83, and lysine 112; that span reads DS. A Mg(2+)-binding site is contributed by glutamate 114. The Proton acceptor role is filled by glutamate 177.

The protein belongs to the PanB family. As to quaternary structure, homodecamer; pentamer of dimers. Mg(2+) serves as cofactor.

Its subcellular location is the cytoplasm. It carries out the reaction 3-methyl-2-oxobutanoate + (6R)-5,10-methylene-5,6,7,8-tetrahydrofolate + H2O = 2-dehydropantoate + (6S)-5,6,7,8-tetrahydrofolate. It participates in cofactor biosynthesis; (R)-pantothenate biosynthesis; (R)-pantoate from 3-methyl-2-oxobutanoate: step 1/2. Its function is as follows. Catalyzes the reversible reaction in which hydroxymethyl group from 5,10-methylenetetrahydrofolate is transferred onto alpha-ketoisovalerate to form ketopantoate. In Nitratiruptor sp. (strain SB155-2), this protein is 3-methyl-2-oxobutanoate hydroxymethyltransferase.